Here is a 238-residue protein sequence, read N- to C-terminus: tRNA (guanine-N(7)-)-methyltransferase (238 aa).

Positions 1 to 12 (MTDTAENQTPND) are enriched in polar residues. A disordered region spans residues 1–20 (MTDTAENQTPNDRQAGHPRS). S-adenosyl-L-methionine-binding residues include Glu70, Asp95, Asp122, and Asp145. Asp145 is a catalytic residue. Substrate-binding positions include Lys149, Asp181, and 216 to 219 (TKFE).

Belongs to the class I-like SAM-binding methyltransferase superfamily. TrmB family.

The catalysed reaction is guanosine(46) in tRNA + S-adenosyl-L-methionine = N(7)-methylguanosine(46) in tRNA + S-adenosyl-L-homocysteine. Its pathway is tRNA modification; N(7)-methylguanine-tRNA biosynthesis. Catalyzes the formation of N(7)-methylguanine at position 46 (m7G46) in tRNA. This Neisseria gonorrhoeae (strain NCCP11945) protein is tRNA (guanine-N(7)-)-methyltransferase.